A 1225-amino-acid chain; its full sequence is ATP-dependent helicase/nuclease subunit A (1225 aa).

The UvrD-like helicase ATP-binding domain maps to 11–478 (AQWTDAQWKS…IDLSKNFRSR (468 aa)). Position 32-39 (32-39 (AAAGSGKT)) interacts with ATP. The UvrD-like helicase C-terminal domain occupies 479–790 (KEVLATTNYL…RMMTVHSSKG (312 aa)). Basic and acidic residues predominate over residues 999–1014 (EKPSKQSVSELKRQLE). Positions 999–1018 (EKPSKQSVSELKRQLETEES) are disordered.

This sequence belongs to the helicase family. AddA subfamily. As to quaternary structure, heterodimer of AddA and AddB/RexB. Requires Mg(2+) as cofactor.

It carries out the reaction Couples ATP hydrolysis with the unwinding of duplex DNA by translocating in the 3'-5' direction.. The catalysed reaction is ATP + H2O = ADP + phosphate + H(+). In terms of biological role, the heterodimer acts as both an ATP-dependent DNA helicase and an ATP-dependent, dual-direction single-stranded exonuclease. Recognizes the chi site generating a DNA molecule suitable for the initiation of homologous recombination. The AddA nuclease domain is required for chi fragment generation; this subunit has the helicase and 3' -&gt; 5' nuclease activities. This Staphylococcus haemolyticus (strain JCSC1435) protein is ATP-dependent helicase/nuclease subunit A.